Here is a 407-residue protein sequence, read N- to C-terminus: uncharacterized protein (407 aa).

Coiled coils occupy residues 96–130 (TDSIEYEDEKLNELEKTRKEHTDKVKLMQQQFKNE) and 287–345 (MKCY…AKTS). The segment covering 302–317 (EKRKDNLQKQNEEAAK) has biased composition (basic and acidic residues). A disordered region spans residues 302-394 (EKRKDNLQKQ…NMDPAINESD (93 aa)). The segment covering 318–331 (ITKRKNRQEKRREK) has biased composition (basic residues). Over residues 344-370 (TSVSSIPDTSSTTTSTNSTPTNTKSNS) the composition is skewed to low complexity.

This is an uncharacterized protein from Acanthamoeba polyphaga (Amoeba).